Reading from the N-terminus, the 240-residue chain is Keratinocyte-associated protein 3 (240 aa).

4 consecutive transmembrane segments (helical) span residues Val21–Gly41, Val63–Ser83, Leu95–Leu115, and Ala163–Tyr183.

This sequence belongs to the TMEM54 family.

The protein localises to the membrane. The polypeptide is Keratinocyte-associated protein 3 (Krtcap3) (Mus musculus (Mouse)).